Here is a 224-residue protein sequence, read N- to C-terminus: Ras-related protein Rab-32C (224 aa).

Residues 1 to 22 (MYSNKNDKDKDKDQNNENNKNN) are disordered. A GTP-binding site is contributed by 35 to 42 (GKLACGKT). The short motif at 57 to 65 (YKPTIGVDF) is the Effector region element. GTP-binding positions include 83–87 (DIAGQ) and 142–145 (NKCD). The segment at 203 to 224 (GFKLSDQSQSTETTPTQSKTCC) is disordered. Over residues 209–224 (QSQSTETTPTQSKTCC) the composition is skewed to low complexity. 2 S-geranylgeranyl cysteine lipidation sites follow: Cys223 and Cys224.

It belongs to the small GTPase superfamily. Rab family.

The chain is Ras-related protein Rab-32C (rab32C) from Dictyostelium discoideum (Social amoeba).